The primary structure comprises 133 residues: Ribonuclease VapC1 (133 aa).

Positions 7 and 98 each coordinate Mg(2+).

The protein belongs to the PINc/VapC protein family. It depends on Mg(2+) as a cofactor.

In terms of biological role, toxic component of a type II toxin-antitoxin (TA) system. The cognate antitoxin is VapB1. The chain is Ribonuclease VapC1 from Mycobacterium tuberculosis (strain CDC 1551 / Oshkosh).